A 1453-amino-acid chain; its full sequence is Clustered mitochondria protein homolog (1453 aa).

Positions 78–101 (LSENGQENSPHNSDSGHETSSPDS) are enriched in polar residues. Residues 78–110 (LSENGQENSPHNSDSGHETSSPDSPLTPIEEGA) are disordered. The Clu domain maps to 439-690 (EDGIRAEDCT…RTFPPDVNYL (252 aa)). The disordered stretch occupies residues 979–1015 (PLTPSNEEVSMPINSVKKSRSSKRRKQISSGGKENDD). Residues 995-1005 (KKSRSSKRRKQ) show a composition bias toward basic residues. TPR repeat units follow at residues 1235–1268 (AEID…HQIY) and 1277–1310 (ALIY…YSKT).

This sequence belongs to the CLU family.

It localises to the cytoplasm. Its function is as follows. mRNA-binding protein involved in proper cytoplasmic distribution of mitochondria. This chain is Clustered mitochondria protein homolog, found in Brugia malayi (Filarial nematode worm).